The following is a 307-amino-acid chain: Methionyl-tRNA formyltransferase (307 aa).

108-111 (SLLP) is a binding site for (6S)-5,6,7,8-tetrahydrofolate.

It belongs to the Fmt family.

The enzyme catalyses L-methionyl-tRNA(fMet) + (6R)-10-formyltetrahydrofolate = N-formyl-L-methionyl-tRNA(fMet) + (6S)-5,6,7,8-tetrahydrofolate + H(+). Its function is as follows. Attaches a formyl group to the free amino group of methionyl-tRNA(fMet). The formyl group appears to play a dual role in the initiator identity of N-formylmethionyl-tRNA by promoting its recognition by IF2 and preventing the misappropriation of this tRNA by the elongation apparatus. The protein is Methionyl-tRNA formyltransferase of Xanthomonas campestris pv. campestris (strain 8004).